Here is a 277-residue protein sequence, read N- to C-terminus: Large ribosomal subunit protein uL2 (277 aa).

2 disordered regions span residues 35–60 (EKQS…GHKQ) and 225–277 (MNPV…ANKR). The segment covering 43–53 (RNNNGHITTRH) has biased composition (polar residues).

Belongs to the universal ribosomal protein uL2 family. In terms of assembly, part of the 50S ribosomal subunit. Forms a bridge to the 30S subunit in the 70S ribosome.

Its function is as follows. One of the primary rRNA binding proteins. Required for association of the 30S and 50S subunits to form the 70S ribosome, for tRNA binding and peptide bond formation. It has been suggested to have peptidyltransferase activity; this is somewhat controversial. Makes several contacts with the 16S rRNA in the 70S ribosome. This Methylobacillus flagellatus (strain ATCC 51484 / DSM 6875 / VKM B-1610 / KT) protein is Large ribosomal subunit protein uL2.